The following is a 123-amino-acid chain: Small ribosomal subunit protein uS12 (123 aa).

Asp89 is subject to 3-methylthioaspartic acid.

The protein belongs to the universal ribosomal protein uS12 family. Part of the 30S ribosomal subunit. Contacts proteins S8 and S17. May interact with IF1 in the 30S initiation complex.

With S4 and S5 plays an important role in translational accuracy. Its function is as follows. Interacts with and stabilizes bases of the 16S rRNA that are involved in tRNA selection in the A site and with the mRNA backbone. Located at the interface of the 30S and 50S subunits, it traverses the body of the 30S subunit contacting proteins on the other side and probably holding the rRNA structure together. The combined cluster of proteins S8, S12 and S17 appears to hold together the shoulder and platform of the 30S subunit. This chain is Small ribosomal subunit protein uS12, found in Bradyrhizobium diazoefficiens (strain JCM 10833 / BCRC 13528 / IAM 13628 / NBRC 14792 / USDA 110).